Consider the following 181-residue polypeptide: Inner membrane-spanning protein YciB (181 aa).

5 helical membrane passes run 22–42 (IYTATGALIVATAVQLILTYV), 50–70 (MQLITFIMVTVFGGMTIFLHD), 80–100 (IVYAVFAAGLIIAQILGRPII), 118–138 (INYAWILFFTACSIANLYVAF), and 148–168 (FKVFGLLGLTFIYTLLTGMYV).

The protein belongs to the YciB family.

The protein resides in the cell inner membrane. Its function is as follows. Plays a role in cell envelope biogenesis, maintenance of cell envelope integrity and membrane homeostasis. This Aliivibrio salmonicida (strain LFI1238) (Vibrio salmonicida (strain LFI1238)) protein is Inner membrane-spanning protein YciB.